A 456-amino-acid chain; its full sequence is tRNA modification GTPase MnmE (456 aa).

(6S)-5-formyl-5,6,7,8-tetrahydrofolate contacts are provided by Arg24, Glu81, and Lys120. Residues 216–379 (GMKVVIAGRP…LREHLKECIG (164 aa)) form the TrmE-type G domain. Asn226 lines the K(+) pocket. Residues 226–231 (NAGKSS), 245–251 (TAIEGTT), and 270–273 (DTAG) contribute to the GTP site. Position 230 (Ser230) interacts with Mg(2+). Residues Thr245, Ile247, and Thr250 each contribute to the K(+) site. Thr251 contacts Mg(2+). A (6S)-5-formyl-5,6,7,8-tetrahydrofolate-binding site is contributed by Lys456.

It belongs to the TRAFAC class TrmE-Era-EngA-EngB-Septin-like GTPase superfamily. TrmE GTPase family. Homodimer. Heterotetramer of two MnmE and two MnmG subunits. K(+) serves as cofactor.

The protein localises to the cytoplasm. Functionally, exhibits a very high intrinsic GTPase hydrolysis rate. Involved in the addition of a carboxymethylaminomethyl (cmnm) group at the wobble position (U34) of certain tRNAs, forming tRNA-cmnm(5)s(2)U34. This chain is tRNA modification GTPase MnmE, found in Marinobacter nauticus (strain ATCC 700491 / DSM 11845 / VT8) (Marinobacter aquaeolei).